A 372-amino-acid polypeptide reads, in one-letter code: Molybdopterin synthase catalytic subunit (372 aa).

Substrate is bound by residues 101-102 (HR), Lys-117, and 124-126 (KKE).

This sequence belongs to the MoaE family. MOCS2B subfamily. Heterotetramer; composed of 2 small (Mocs2A) and 2 large (Mocs2B) subunits.

The protein localises to the cytoplasm. The catalysed reaction is 2 [molybdopterin-synthase sulfur-carrier protein]-C-terminal-Gly-aminoethanethioate + cyclic pyranopterin phosphate + H2O = molybdopterin + 2 [molybdopterin-synthase sulfur-carrier protein]-C-terminal Gly-Gly + 2 H(+). It participates in cofactor biosynthesis; molybdopterin biosynthesis. In terms of biological role, catalytic subunit of the molybdopterin synthase complex, a complex that catalyzes the conversion of precursor Z into molybdopterin. Acts by mediating the incorporation of 2 sulfur atoms from thiocarboxylated Mocs2A into precursor Z to generate a dithiolene group. This Drosophila willistoni (Fruit fly) protein is Molybdopterin synthase catalytic subunit.